Consider the following 392-residue polypeptide: Succinate--CoA ligase [ADP-forming] subunit beta (392 aa).

The 239-residue stretch at 9–247 folds into the ATP-grasp domain; it reads KAILRKYGVA…VTEEDPLEVE (239 aa). ATP is bound by residues lysine 49, 56 to 58, glutamate 102, leucine 105, and glutamate 110; that span reads GRG. Positions 202 and 216 each coordinate Mg(2+). Residues asparagine 267 and 324-326 contribute to the substrate site; that span reads GIL.

This sequence belongs to the succinate/malate CoA ligase beta subunit family. In terms of assembly, heterotetramer of two alpha and two beta subunits. Mg(2+) serves as cofactor.

The enzyme catalyses succinate + ATP + CoA = succinyl-CoA + ADP + phosphate. It carries out the reaction GTP + succinate + CoA = succinyl-CoA + GDP + phosphate. Its pathway is carbohydrate metabolism; tricarboxylic acid cycle; succinate from succinyl-CoA (ligase route): step 1/1. Succinyl-CoA synthetase functions in the citric acid cycle (TCA), coupling the hydrolysis of succinyl-CoA to the synthesis of either ATP or GTP and thus represents the only step of substrate-level phosphorylation in the TCA. The beta subunit provides nucleotide specificity of the enzyme and binds the substrate succinate, while the binding sites for coenzyme A and phosphate are found in the alpha subunit. The chain is Succinate--CoA ligase [ADP-forming] subunit beta from Koribacter versatilis (strain Ellin345).